The sequence spans 260 residues: Global transcriptional regulator CodY (260 aa).

Residues 1 to 159 are GAF domain; sequence MPNLLEKTRK…SSTVVGIQLL (159 aa). Positions 207–226 form a DNA-binding region, H-T-H motif; sequence ASVIADRIGITRSVIVNALR.

This sequence belongs to the CodY family.

The protein resides in the cytoplasm. In terms of biological role, DNA-binding global transcriptional regulator which is involved in the adaptive response to starvation and acts by directly or indirectly controlling the expression of numerous genes in response to nutrient availability. During rapid exponential growth, CodY is highly active and represses genes whose products allow adaptation to nutrient depletion. The sequence is that of Global transcriptional regulator CodY from Streptococcus pyogenes serotype M1.